Reading from the N-terminus, the 139-residue chain is Peptide methionine sulfoxide reductase MsrB (139 aa).

Residues 8 to 130 enclose the MsrB domain; that stretch reads DREWQRELSP…NSASLQLKTQ (123 aa). Positions 47, 50, 96, and 99 each coordinate Zn(2+). Cys-119 serves as the catalytic Nucleophile.

It belongs to the MsrB Met sulfoxide reductase family. The cofactor is Zn(2+).

It catalyses the reaction L-methionyl-[protein] + [thioredoxin]-disulfide + H2O = L-methionyl-(R)-S-oxide-[protein] + [thioredoxin]-dithiol. This is Peptide methionine sulfoxide reductase MsrB from Acinetobacter baumannii (strain AB307-0294).